A 267-amino-acid polypeptide reads, in one-letter code: Tryptophan synthase alpha chain (267 aa).

Residues glutamate 47 and aspartate 58 each act as proton acceptor in the active site.

Belongs to the TrpA family. As to quaternary structure, tetramer of two alpha and two beta chains.

It catalyses the reaction (1S,2R)-1-C-(indol-3-yl)glycerol 3-phosphate + L-serine = D-glyceraldehyde 3-phosphate + L-tryptophan + H2O. The protein operates within amino-acid biosynthesis; L-tryptophan biosynthesis; L-tryptophan from chorismate: step 5/5. In terms of biological role, the alpha subunit is responsible for the aldol cleavage of indoleglycerol phosphate to indole and glyceraldehyde 3-phosphate. This chain is Tryptophan synthase alpha chain, found in Pelodictyon phaeoclathratiforme (strain DSM 5477 / BU-1).